The following is a 34-amino-acid chain: MSDIN-like toxin proprotein 12 (34 aa).

A propeptide spanning residues 1-10 (MSDINATRLP) is cleaved from the precursor. The cyclopeptide (His-Pro) cross-link spans 11-19 (HPFPLGLQP). A propeptide spanning residues 20–34 (CAGDVDNLTLTKGEG) is cleaved from the precursor.

The protein belongs to the MSDIN fungal toxin family. In terms of processing, processed by the macrocyclase-peptidase enzyme POPB to yield a toxic cyclic nonapeptide. POPB first removes 10 residues from the N-terminus. Conformational trapping of the remaining peptide forces the enzyme to release this intermediate rather than proceed to macrocyclization. The enzyme rebinds the remaining peptide in a different conformation and catalyzes macrocyclization of the N-terminal 9 residues.

Probable toxin that belongs to the MSDIN-like toxin family responsible for a large number of food poisoning cases and deaths. This chain is MSDIN-like toxin proprotein 12, found in Amanita bisporigera (Destroying angel).